The following is a 98-amino-acid chain: DNA/RNA-binding protein Alba (98 aa).

Lys-16 carries the post-translational modification N6-acetyllysine.

It belongs to the histone-like Alba family. In terms of processing, acetylated. Acetylation at Lys-16 decreases DNA-binding affinity.

The protein resides in the cytoplasm. It is found in the chromosome. In terms of biological role, binds double-stranded DNA tightly but without sequence specificity. Involved in DNA compaction. The protein is DNA/RNA-binding protein Alba of Metallosphaera sedula (strain ATCC 51363 / DSM 5348 / JCM 9185 / NBRC 15509 / TH2).